The primary structure comprises 340 residues: Selenide, water dikinase (340 aa).

The active site involves Cys13. ATP-binding positions include Lys16 and 43–45 (ASD). Asp46 lines the Mg(2+) pocket. Residues Asp63, Asp86, and 133–135 (GHS) each bind ATP. Asp86 provides a ligand contact to Mg(2+). Asp221 contacts Mg(2+).

It belongs to the selenophosphate synthase 1 family. Class I subfamily. In terms of assembly, homodimer. Mg(2+) serves as cofactor.

The catalysed reaction is hydrogenselenide + ATP + H2O = selenophosphate + AMP + phosphate + 2 H(+). In terms of biological role, synthesizes selenophosphate from selenide and ATP. The chain is Selenide, water dikinase from Desulfitobacterium hafniense (strain DSM 10664 / DCB-2).